A 330-amino-acid chain; its full sequence is Membrane progestin receptor gamma (330 aa).

Topologically, residues 1–51 (MLSLKLPRLFRIDQVPQVFHEQGILFGYRHPQSSATACILSLFQMTNETLN) are cytoplasmic. A helical membrane pass occupies residues 52-72 (IWTHLLPFWFFVWRFMTALYV). At 73–81 (TDIQNDSYS) the chain is on the extracellular side. Residues 82–101 (WPMLVYMCTSCVYPLASSCA) traverse the membrane as a helical segment. Residues 102–113 (HTFSSMSKNARH) lie on the Cytoplasmic side of the membrane. The chain crosses the membrane as a helical span at residues 114 to 134 (ICYFLDYGAVNLFSLGSAIAY). Over 135–141 (SAYTFPD) the chain is Extracellular. The helical transmembrane segment at 142–162 (ALVCSTFHECYVALAVLNTIL) threads the bilayer. Topologically, residues 163-186 (STGLSCYSRFLELQKPRLCKLLRV) are cytoplasmic. Residues 187 to 207 (LAFAYPYTWDSLPIFYRLFLF) traverse the membrane as a helical segment. The Extracellular portion of the chain corresponds to 208–253 (PGESSRNEAMLYHQKHMGMTLLASFFYSAHLPERLAPGRFDYIGHS). Residues 254–274 (HQLFHVCVILATHLQMEAILL) form a helical membrane-spanning segment. At 275–294 (DKTLRREWLLATSRPFSFPQ) the chain is on the cytoplasmic side. A helical transmembrane segment spans residues 295–315 (IAAAMLLCIIFSLSNIIYFSA). Residues 316-330 (ALYRIPEPELHEKET) lie on the Extracellular side of the membrane.

Belongs to the ADIPOR family.

The protein resides in the cell membrane. Plasma membrane progesterone (P4) receptor coupled to G proteins. Seems to act through a G(i) mediated pathway. May be involved in oocyte maturation. The protein is Membrane progestin receptor gamma of Mus musculus (Mouse).